The sequence spans 43 residues: Protein PsbN (43 aa).

Residues 4-24 (ATIIVIFVSSLLLGITAYSIY) traverse the membrane as a helical segment.

This sequence belongs to the PsbN family.

The protein resides in the plastid. The protein localises to the chloroplast thylakoid membrane. In terms of biological role, may play a role in photosystem I and II biogenesis. The polypeptide is Protein PsbN (Trieres chinensis (Marine centric diatom)).